Reading from the N-terminus, the 682-residue chain is Tetratricopeptide repeat protein 39B (682 aa).

TPR repeat units lie at residues 393–426 (SLVL…QEEW) and 626–659 (PFTL…YKDY).

It belongs to the TTC39 family.

Functionally, regulates high density lipoprotein (HDL) cholesterol metabolism by promoting the ubiquitination and degradation of the oxysterols receptors LXR (NR1H2 and NR1H3). The polypeptide is Tetratricopeptide repeat protein 39B (Homo sapiens (Human)).